The primary structure comprises 176 residues: Tubulin polymerization-promoting protein family member 3 (176 aa).

A disordered region spans residues 126-152; sequence TDTSKYTGSHKERFDESGKGKGKGGRE. Residues 134–152 are compositionally biased toward basic and acidic residues; it reads SHKERFDESGKGKGKGGRE.

It belongs to the TPPP family.

It is found in the cytoplasm. The protein resides in the cytoskeleton. In terms of biological role, regulator of microtubule dynamic that has microtubule bundling activity. This is Tubulin polymerization-promoting protein family member 3 (tppp3) from Xenopus tropicalis (Western clawed frog).